Here is a 536-residue protein sequence, read N- to C-terminus: Probable galacturonosyltransferase 10 (536 aa).

Residues 1 to 16 (MRRRGGDSFRRAGRRK) lie on the Cytoplasmic side of the membrane. A helical; Signal-anchor for type II membrane protein membrane pass occupies residues 17 to 37 (ISNVVWWVLSGIALLLFFLIL). The Lumenal portion of the chain corresponds to 38–536 (SKAGHIEPRP…SPFMQQCNFH (499 aa)). 5 N-linked (GlcNAc...) asparagine glycosylation sites follow: Asn-64, Asn-246, Asn-300, Asn-403, and Asn-436.

Belongs to the glycosyltransferase 8 family. Expressed in roots, inflorescences, siliques, leaves and stems.

It localises to the golgi apparatus membrane. The protein operates within glycan metabolism; pectin biosynthesis. Its function is as follows. May be involved in pectin and/or xylans biosynthesis in cell walls. This is Probable galacturonosyltransferase 10 (GAUT10) from Arabidopsis thaliana (Mouse-ear cress).